The following is a 163-amino-acid chain: ADP-ribosylation factor-like protein 2-binding protein (163 aa).

This sequence belongs to the ARL2BP family. Interacts with GTP bound ARL2 and ARL3; the complex ARL2-ARL2BP as well as ARL2BP alone, binds to SLC25A4/ANT1. Interaction with ARL2 may be required for targeting to cilia basal body. Interacts with STAT3; interaction is enhanced with ARL2. Found in a complex with ARL2, ARL2BP and SLC25A4. Interacts with STAT2, STAT3 and STAT4. Found in a complex with ARL2BP, ARL2 and SLC25A6. As to expression, expressed in brain.

It is found in the cytoplasm. The protein localises to the mitochondrion intermembrane space. It localises to the cytoskeleton. Its subcellular location is the microtubule organizing center. The protein resides in the centrosome. It is found in the nucleus. The protein localises to the spindle. It localises to the cilium basal body. Its function is as follows. Together with ARL2, plays a role in the nuclear translocation, retention and transcriptional activity of STAT3. May play a role as an effector of ARL2. In Bos taurus (Bovine), this protein is ADP-ribosylation factor-like protein 2-binding protein (ARL2BP).